We begin with the raw amino-acid sequence, 1497 residues long: MMANWVGARPLLILSVLLGYCVSIKAQEQENDEYDEEIACTQHGQMYLNRDIWKPSPCQICVCDNGAILCDKIECPEVLNCANPITPTGECCPVCPQTGGGDTSFGRGRKGQKGEPGLVPVVTGIRGRPGPAGPPGSQGPRGDRGPKGRPGPRGPQGIDGEPGVPGQPGAPGPPGHPSHPGPDGMSRPFSAQMAGLDEKSGLGSQVGLMPGSVGPVGPRGPQGLQGQQGGVGPAGPPGEPGEPGPMGPIGSRGPEGPPGKPGEDGEPGRNGNTGEVGFSGSPGARGFPGAPGLPGLKGHRGHKGLEGPKGEIGAPGAKGEAGPTGPMGAMGPLGPRGMPGERGRLGPQGAPGKRGAHGMPGKPGPMGPLGIPGSSGFPGNPGMKGEAGPTGARGPEGPQGQRGETGPPGPAGSQGLPGAVGTDGTPGAKGPTGSAGTSGPPGLAGPPGSPGPQGSTGPQGIRGQSGDPGVPGFKGEAGPKGEPGPHGIQGPIGPPGEEGKRGPRGDPGTVGPPGPMGERGAPGNRGFPGSDGLPGPKGAQGERGPVGSSGPKGGQGDPGRPGEPGLPGARGLTGNPGVQGPEGKLGPLGAPGEDGRPGPPGSIGIRGQPGSMGLPGPKGSSGDLGKPGEAGNAGVPGQRGAPGKDGEVGPSGPVGPPGLAGERGEQGPPGPTGFQGLPGPPGPPGEGGKAGDQGVPGEPGAVGPLGPRGERGNPGERGEPGITGLPGEKGMAGGHGPDGPKGNPGPTGTIGDTGPPGLQGMPGERGIAGTPGPKGDRGGIGEKGAEGTAGNDGARGLPGPLGPPGPAGPTGEKGEPGPRGLVGPPGSRGNPGSRGENGPTGAVGFAGPQGPDGQPGVKGEPGEPGQKGDAGSPGPQGLAGSPGPHGPHGVPGLKGGRGTQGPPGATGFPGSAGRVGPPGPAGAPGPAGPAGEPGKEGPPGLRGDPGSHGRVGDRGPAGPPGSPGDKGDPGEDGQPGPDGPPGPAGTTGQRGIVGMPGQRGERGMPGLPGPAGTPGKVGPTGATGDKGPPGPVGPPGSNGPVGEPGPEGPAGNDGTPGRDGAVGERGDRGDPGPAGLPGSQGAPGTPGPVGAPGDAGQRGEPGSRGPVGPPGRAGKRGLPGPQGPRGDKGDNGDRGDRGQKGHRGFTGLQGLPGPPGPNGEQGSAGIPGPFGPRGPPGPVGPSGKEGNPGPLGPIGPPGVRGSVGEAGPEGPPGEPGPPGPPGPPGHLTAALGDIMGHYDENMPDPLPEFTEDQAAPDDTNKTDPGIHVTLKSLSSQIETMRSPDGSKKHPARTCDDLKLCHPTKQSGEYWIDPNQGSAEDAIKVYCNMETGETCISANPASVPRKTWWASKSPDNKPVWYGLDMNRGSQFTYGDYQSPNTAITQMTFLRLLSKEASQNLTYICRNTVGYMDDQAKNLKKAVVLKGSNDLEIKGEGNIRFRYTVLQDTCSKRNGNVGKTIFEYRTQNVARLPIIDVGPVDIGNADQEFGLDIGPVCFM.

The signal sequence occupies residues 1–26 (MMANWVGARPLLILSVLLGYCVSIKA). The VWFC domain maps to 38–96 (IACTQHGQMYLNRDIWKPSPCQICVCDNGAILCDKIECPEVLNCANPITPTGECCPVCP). The interval 103–1265 (TSFGRGRKGQ…PDDTNKTDPG (1163 aa)) is disordered. Residues 141–143 (RGD) carry the Cell attachment site motif. Residues 155-164 (PQGIDGEPGV) show a composition bias toward low complexity. Pro residues predominate over residues 168-180 (PGAPGPPGHPSHP). Positions 210–225 (PGSVGPVGPRGPQGLQ) are enriched in low complexity. The span at 234–246 (AGPPGEPGEPGPM) shows a compositional bias: pro residues. A 4-hydroxyproline mark is found at Pro288, Pro291, and Pro294. Low complexity-rich tracts occupy residues 320-338 (EAGPTGPMGAMGPLGPRGM) and 425-441 (TPGAKGPTGSAGTSGPP). A Cell attachment site motif is present at residues 504–506 (RGD). Residues 550–559 (GPKGGQGDPG) show a composition bias toward gly residues. Low complexity predominate over residues 602–611 (SIGIRGQPGS). 4-hydroxyproline occurs at positions 609 and 615. Positions 708–719 (RGERGNPGERGE) are enriched in basic and acidic residues. Residues 730-739 (GMAGGHGPDG) show a composition bias toward gly residues. Positions 744–756 (PGPTGTIGDTGPP) are enriched in low complexity. Over residues 774 to 785 (KGDRGGIGEKGA) the composition is skewed to basic and acidic residues. Composition is skewed to low complexity over residues 824–839 (PPGSRGNPGSRGENGP) and 878–891 (LAGSPGPHGPHGVP). Over residues 892–901 (GLKGGRGTQG) the composition is skewed to gly residues. The segment covering 917 to 927 (PPGPAGAPGPA) has biased composition (pro residues). 3 consecutive short sequence motifs (cell attachment site) follow at residues 942 to 944 (RGD), 1065 to 1067 (RGD), and 1068 to 1070 (RGD). The segment covering 1061-1070 (AVGERGDRGD) has biased composition (basic and acidic residues). Low complexity predominate over residues 1091–1112 (APGDAGQRGEPGSRGPVGPPGR). 2 consecutive short sequence motifs (cell attachment site) follow at residues 1125–1127 (RGD) and 1134–1136 (RGD). Over residues 1125–1139 (RGDKGDNGDRGDRGQ) the composition is skewed to basic and acidic residues. 2 stretches are compositionally biased toward pro residues: residues 1169–1179 (PFGPRGPPGPV) and 1209–1224 (EGPPGEPGPPGPPGPP). The propeptide at 1228-1497 (TAALGDIMGH…GLDIGPVCFM (270 aa)) is C-terminal propeptide. Asn1260 carries an N-linked (GlcNAc...) asparagine glycan. The Fibrillar collagen NC1 domain maps to 1264 to 1497 (PGIHVTLKSL…GLDIGPVCFM (234 aa)). Disulfide bonds link Cys1294-Cys1326, Cys1334-Cys1495, and Cys1403-Cys1448. Ca(2+) contacts are provided by Asp1312, Asn1314, Gln1315, and Asp1320. An N-linked (GlcNAc...) asparagine glycan is attached at Asn1398.

This sequence belongs to the fibrillar collagen family. Trimers of two alpha 1(V) and one alpha 2(V) chains expressed in most tissues and trimers of one alpha 1(V), one alpha 2(V), and one alpha 3(V) chains with a more limited distribution of expression. Prolines at the third position of the tripeptide repeating unit (G-X-P) are hydroxylated in some or all of the chains. Probably 3-hydroxylated on prolines by LEPREL1. Post-translationally, hydroxylation on proline residues within the sequence motif, GXPG, is most likely to be 4-hydroxy as this fits the requirement for 4-hydroxylation in vertebrates.

It is found in the secreted. Its subcellular location is the extracellular space. The protein resides in the extracellular matrix. Type V collagen is a member of group I collagen (fibrillar forming collagen). It is a minor connective tissue component of nearly ubiquitous distribution. Type V collagen binds to DNA, heparan sulfate, thrombospondin, heparin, and insulin. Type V collagen is a key determinant in the assembly of tissue-specific matrices. This is Collagen alpha-2(V) chain from Mus musculus (Mouse).